The sequence spans 287 residues: Formamidopyrimidine-DNA glycosylase (287 aa).

Proline 2 (schiff-base intermediate with DNA) is an active-site residue. Residue glutamate 3 is the Proton donor of the active site. Residue lysine 61 is the Proton donor; for beta-elimination activity of the active site. Residues histidine 95, arginine 115, and arginine 157 each contribute to the DNA site. The FPG-type zinc finger occupies 243 to 277; that stretch reads NVYGRADQPCRRCGTPVRREAFMNRSSYSCPRCQP. The Proton donor; for delta-elimination activity role is filled by arginine 267.

It belongs to the FPG family. Monomer. Zn(2+) is required as a cofactor.

The catalysed reaction is Hydrolysis of DNA containing ring-opened 7-methylguanine residues, releasing 2,6-diamino-4-hydroxy-5-(N-methyl)formamidopyrimidine.. The enzyme catalyses 2'-deoxyribonucleotide-(2'-deoxyribose 5'-phosphate)-2'-deoxyribonucleotide-DNA = a 3'-end 2'-deoxyribonucleotide-(2,3-dehydro-2,3-deoxyribose 5'-phosphate)-DNA + a 5'-end 5'-phospho-2'-deoxyribonucleoside-DNA + H(+). Functionally, involved in base excision repair of DNA damaged by oxidation or by mutagenic agents. Acts as a DNA glycosylase that recognizes and removes damaged bases. Has a preference for oxidized purines, such as 7,8-dihydro-8-oxoguanine (8-oxoG). Has AP (apurinic/apyrimidinic) lyase activity and introduces nicks in the DNA strand. Cleaves the DNA backbone by beta-delta elimination to generate a single-strand break at the site of the removed base with both 3'- and 5'-phosphates. The sequence is that of Formamidopyrimidine-DNA glycosylase from Salinispora arenicola (strain CNS-205).